We begin with the raw amino-acid sequence, 468 residues long: Glutamate--tRNA ligase 2 (468 aa).

The short motif at 9–19 (PSPTGFLHIGG) is the 'HIGH' region element. Residues 238 to 242 (KLSKR) carry the 'KMSKS' region motif. Residue lysine 241 coordinates ATP.

The protein belongs to the class-I aminoacyl-tRNA synthetase family. Glutamate--tRNA ligase type 1 subfamily. As to quaternary structure, monomer.

It is found in the cytoplasm. The enzyme catalyses tRNA(Glu) + L-glutamate + ATP = L-glutamyl-tRNA(Glu) + AMP + diphosphate. Catalyzes the attachment of glutamate to tRNA(Glu) in a two-step reaction: glutamate is first activated by ATP to form Glu-AMP and then transferred to the acceptor end of tRNA(Glu). This Rhodospirillum centenum (strain ATCC 51521 / SW) protein is Glutamate--tRNA ligase 2.